The chain runs to 178 residues: Large ribosomal subunit protein uL6 (178 aa).

Belongs to the universal ribosomal protein uL6 family. As to quaternary structure, part of the 50S ribosomal subunit.

This protein binds to the 23S rRNA, and is important in its secondary structure. It is located near the subunit interface in the base of the L7/L12 stalk, and near the tRNA binding site of the peptidyltransferase center. In Methanobrevibacter smithii (strain ATCC 35061 / DSM 861 / OCM 144 / PS), this protein is Large ribosomal subunit protein uL6.